The following is a 227-amino-acid chain: Ribosomal RNA large subunit methyltransferase E (227 aa).

The S-adenosyl-L-methionine site is built by G78, W80, D103, D119, and D143. K183 (proton acceptor) is an active-site residue.

This sequence belongs to the class I-like SAM-binding methyltransferase superfamily. RNA methyltransferase RlmE family.

It localises to the cytoplasm. It carries out the reaction uridine(2552) in 23S rRNA + S-adenosyl-L-methionine = 2'-O-methyluridine(2552) in 23S rRNA + S-adenosyl-L-homocysteine + H(+). Its function is as follows. Specifically methylates the uridine in position 2552 of 23S rRNA at the 2'-O position of the ribose in the fully assembled 50S ribosomal subunit. This Rickettsia peacockii (strain Rustic) protein is Ribosomal RNA large subunit methyltransferase E.